Consider the following 541-residue polypeptide: Chaperonin GroEL 1 (541 aa).

ATP-binding positions include 29–32, 86–90, G415, 479–481, and D495; these read TIGP, DGTTT, and NAA.

The protein belongs to the chaperonin (HSP60) family. As to quaternary structure, forms a cylinder of 14 subunits composed of two heptameric rings stacked back-to-back. Interacts with the co-chaperonin GroES.

It is found in the cytoplasm. It carries out the reaction ATP + H2O + a folded polypeptide = ADP + phosphate + an unfolded polypeptide.. In terms of biological role, together with its co-chaperonin GroES, plays an essential role in assisting protein folding. The GroEL-GroES system forms a nano-cage that allows encapsulation of the non-native substrate proteins and provides a physical environment optimized to promote and accelerate protein folding. The chain is Chaperonin GroEL 1 from Streptomyces coelicolor (strain ATCC BAA-471 / A3(2) / M145).